Reading from the N-terminus, the 341-residue chain is Anthranilate phosphoribosyltransferase (341 aa).

Residues glycine 79, 82 to 83 (GD), threonine 87, 89 to 92 (NIST), 107 to 115 (KHGNRAVSS), and serine 119 contribute to the 5-phospho-alpha-D-ribose 1-diphosphate site. Residue glycine 79 coordinates anthranilate. Serine 91 is a binding site for Mg(2+). Anthranilate is bound at residue asparagine 110. Arginine 165 provides a ligand contact to anthranilate. The Mg(2+) site is built by aspartate 224 and glutamate 225.

It belongs to the anthranilate phosphoribosyltransferase family. As to quaternary structure, homodimer. Requires Mg(2+) as cofactor.

It catalyses the reaction N-(5-phospho-beta-D-ribosyl)anthranilate + diphosphate = 5-phospho-alpha-D-ribose 1-diphosphate + anthranilate. Its pathway is amino-acid biosynthesis; L-tryptophan biosynthesis; L-tryptophan from chorismate: step 2/5. Catalyzes the transfer of the phosphoribosyl group of 5-phosphorylribose-1-pyrophosphate (PRPP) to anthranilate to yield N-(5'-phosphoribosyl)-anthranilate (PRA). The sequence is that of Anthranilate phosphoribosyltransferase from Bacillus thuringiensis subsp. konkukian (strain 97-27).